We begin with the raw amino-acid sequence, 1020 residues long: C protein alpha-antigen (1020 aa).

The N-terminal stretch at 1–41 is a signal peptide; the sequence is MFRRSKNNSYDTSQTKQRFSIKKFKFGAASVLIGLSFLGGV. The interval 227–964 is 9 X 82 AA tandem repeats; that stretch reads VPDKDKYDPT…EVTVHVTPKP (738 aa). Disordered regions lie at residues 261-281, 306-330, 342-363, 388-445, 470-494, 506-527, 552-576, 588-610, 634-658, 670-692, 716-740, 752-774, 798-822, 834-856, 880-904, and 962-989; these read DGSK…VPGD, PKPV…GTPV, PDGS…VPGD, PKPV…VPGD, PDGS…PGDH, and PKPV…KLPA. Residues 272–281 show a composition bias toward basic and acidic residues; it reads DRPDTNVPGD. Residues 320 to 329 show a composition bias toward polar residues; sequence GETTVPQGTP. Basic and acidic residues predominate over residues 354-363; that stretch reads DRPDTNVPGD. The span at 402 to 411 shows a compositional bias: polar residues; the sequence is GETTVPQGTP. Residues 436-445 show a composition bias toward basic and acidic residues; the sequence is DRPDTNVPGD. Residues 484-493 show a composition bias toward polar residues; that stretch reads GETTVPQGTP. A compositionally biased stretch (basic and acidic residues) spans 518–527; the sequence is DRPDTNVPGD. Residues 566-575 show a composition bias toward polar residues; sequence GETTVPQGTP. Basic and acidic residues predominate over residues 600–610; that stretch reads DRPDTNVPGDH. Polar residues predominate over residues 648 to 657; it reads GETTVPQGTP. Over residues 682–692 the composition is skewed to basic and acidic residues; it reads DRPDTNVPGDH. Polar residues predominate over residues 730-739; it reads GETTVPQGTP. Basic and acidic residues predominate over residues 764–774; sequence DRPDTNVPGDH. Over residues 812 to 821 the composition is skewed to polar residues; it reads GETTVPQGTP. The segment covering 846–856 has biased composition (basic and acidic residues); it reads DRPDTNVPGDH. A compositionally biased stretch (polar residues) spans 894–903; the sequence is GETTVPQGTP. An LPXTG sorting signal motif is present at residues 987–991; it reads LPATG. T990 is subject to Pentaglycyl murein peptidoglycan amidated threonine. A propeptide spans 991-1020 (removed by sortase); the sequence is GENATPFFNVAALTIISSVGLLSVSKKKED.

It localises to the secreted. It is found in the cell wall. Its function is as follows. May play a role in both virulence and immunity. In Streptococcus agalactiae serotype Ia (strain ATCC 27591 / A909 / CDC SS700), this protein is C protein alpha-antigen (bca).